A 115-amino-acid polypeptide reads, in one-letter code: Large ribosomal subunit protein bL20c (115 aa).

The protein belongs to the bacterial ribosomal protein bL20 family.

Its subcellular location is the plastid. The protein localises to the chloroplast. Its function is as follows. Binds directly to 23S ribosomal RNA and is necessary for the in vitro assembly process of the 50S ribosomal subunit. It is not involved in the protein synthesizing functions of that subunit. The protein is Large ribosomal subunit protein bL20c of Emiliania huxleyi (Coccolithophore).